We begin with the raw amino-acid sequence, 287 residues long: Chlorophyll a-b binding protein CP29.2, chloroplastic (287 aa).

The transit peptide at 1–31 directs the protein to the chloroplast; it reads MAATSTAAAASSIMGTRVVSDISSNSSRFTA. The residue at position 32 (arginine 32) is an N2-acetylarginine. The residue at position 37 (threonine 37) is a Phosphothreonine. Position 55 (tryptophan 55) interacts with chlorophyll b. Chlorophyll a is bound at residue phenylalanine 75. Residues threonine 109 and threonine 111 each carry the phosphothreonine modification. Chlorophyll a is bound by residues glutamate 137 and histidine 140. Residues 143-163 traverse the membrane as a helical segment; sequence WAMLATLGAITVEWLTGVTWQ. A chlorophyll a-binding site is contributed by leucine 177. The chain crosses the membrane as a helical span at residues 181-201; the sequence is LPFSISTLIWIEVLVIGYIEF. Chlorophyll b is bound by residues glutamate 200 and arginine 203. Chlorophyll a contacts are provided by glutamate 239, histidine 242, arginine 244, glutamine 256, and histidine 271. Residues 245-265 traverse the membrane as a helical segment; sequence LAMVGFLGFAVQAAATGKGPL.

Belongs to the light-harvesting chlorophyll a/b-binding (LHC) protein family. In terms of assembly, the LHC complex consists of chlorophyll a-b binding proteins. Binds at least 14 chlorophylls (8 Chl-a and 6 Chl-b) and carotenoids such as lutein and neoxanthin. serves as cofactor. In terms of processing, photoregulated by reversible phosphorylation of its threonine residues.

The protein localises to the plastid. Its subcellular location is the chloroplast thylakoid membrane. In terms of biological role, the light-harvesting complex (LHC) functions as a light receptor, it captures and delivers excitation energy to photosystems with which it is closely associated. The protein is Chlorophyll a-b binding protein CP29.2, chloroplastic (LHCB4.2) of Arabidopsis thaliana (Mouse-ear cress).